Here is a 394-residue protein sequence, read N- to C-terminus: L-lactate dehydrogenase (394 aa).

The 380-residue stretch at 1 to 380 (MIISAASDYR…SRDSLVQNAE (380 aa)) folds into the FMN hydroxy acid dehydrogenase domain. Residue tyrosine 24 coordinates substrate. The FMN site is built by serine 106 and glutamine 127. Position 129 (tyrosine 129) interacts with substrate. Threonine 155 contacts FMN. Arginine 164 contacts substrate. Position 251 (lysine 251) interacts with FMN. Residue histidine 275 is the Proton acceptor of the active site. A substrate-binding site is contributed by arginine 278. 306–330 (DSGIRNGLDVVRMIALGADSVLLGR) is an FMN binding site.

This sequence belongs to the FMN-dependent alpha-hydroxy acid dehydrogenase family. The cofactor is FMN.

It is found in the cell inner membrane. The catalysed reaction is (S)-lactate + A = pyruvate + AH2. Catalyzes the conversion of L-lactate to pyruvate. Is coupled to the respiratory chain. The protein is L-lactate dehydrogenase of Klebsiella pneumoniae subsp. pneumoniae (strain ATCC 700721 / MGH 78578).